Consider the following 241-residue polypeptide: ATP synthase subunit a (241 aa).

The next 8 helical transmembrane spans lie at 29–49, 54–74, 86–106, 114–134, 153–173, 177–197, 200–220, and 221–241; these read NSSF…LFGI, VIPG…ISII, IPLI…GVLP, HVIV…IVGF, WLAP…PVSL, LAAN…FIVN, IFFT…EVFV, and AILQ…DAVK.

Belongs to the ATPase A chain family. As to quaternary structure, F-type ATPases have 2 components, CF(1) - the catalytic core - and CF(0) - the membrane proton channel. CF(1) has five subunits: alpha(3), beta(3), gamma(1), delta(1), epsilon(1). CF(0) has three main subunits: a(1), b(2) and c(9-12). The alpha and beta chains form an alternating ring which encloses part of the gamma chain. CF(1) is attached to CF(0) by a central stalk formed by the gamma and epsilon chains, while a peripheral stalk is formed by the delta and b chains.

It localises to the cell membrane. Its function is as follows. Key component of the proton channel; it plays a direct role in the translocation of protons across the membrane. This is ATP synthase subunit a from Wolbachia pipientis wMel.